The following is a 150-amino-acid chain: 3-hydroxyacyl-[acyl-carrier-protein] dehydratase FabZ (150 aa).

His-57 is a catalytic residue.

It belongs to the thioester dehydratase family. FabZ subfamily.

It localises to the cytoplasm. It catalyses the reaction a (3R)-hydroxyacyl-[ACP] = a (2E)-enoyl-[ACP] + H2O. Involved in unsaturated fatty acids biosynthesis. Catalyzes the dehydration of short chain beta-hydroxyacyl-ACPs and long chain saturated and unsaturated beta-hydroxyacyl-ACPs. The polypeptide is 3-hydroxyacyl-[acyl-carrier-protein] dehydratase FabZ (Actinobacillus succinogenes (strain ATCC 55618 / DSM 22257 / CCUG 43843 / 130Z)).